The following is a 285-amino-acid chain: Pantothenate synthetase (285 aa).

30-37 lines the ATP pocket; it reads MGYLHEGH. Residue His37 is the Proton donor of the active site. Gln61 contributes to the (R)-pantoate binding site. Gln61 contacts beta-alanine. ATP is bound at residue 148–151; that stretch reads GKKD. A (R)-pantoate-binding site is contributed by Gln154. ATP is bound by residues Ile177 and 185–188; that span reads LSSR.

This sequence belongs to the pantothenate synthetase family. Homodimer.

It is found in the cytoplasm. The catalysed reaction is (R)-pantoate + beta-alanine + ATP = (R)-pantothenate + AMP + diphosphate + H(+). The protein operates within cofactor biosynthesis; (R)-pantothenate biosynthesis; (R)-pantothenate from (R)-pantoate and beta-alanine: step 1/1. Catalyzes the condensation of pantoate with beta-alanine in an ATP-dependent reaction via a pantoyl-adenylate intermediate. This Leptospira borgpetersenii serovar Hardjo-bovis (strain JB197) protein is Pantothenate synthetase.